Here is a 528-residue protein sequence, read N- to C-terminus: Gamma-taxilin (528 aa).

Positions Met1–Arg10 are enriched in basic and acidic residues. The segment at Met1–Glu36 is disordered. Omega-N-methylarginine is present on residues Arg12 and Arg24. Phosphoserine is present on residues Ser79, Ser86, Ser97, and Ser105. Residues Thr102–Asn130 form a disordered region. Residues Glu104–Pro118 are compositionally biased toward basic and acidic residues. A coiled-coil region spans residues Glu153–Ala464. Tyr283 is subject to Phosphotyrosine. Residues His486–Asp528 are disordered. Residues Gln508–Ser520 are compositionally biased toward polar residues. Ser517 is subject to Phosphoserine.

Belongs to the taxilin family. As to quaternary structure, binds to the C-terminal coiled coil region of syntaxin family members STX1A, STX3A and STX4A. Forms a heterodimer with ATF4 in osteoblasts. In terms of tissue distribution, ubiquitously expressed. Expressed at high level in heart and skeletal muscle. Expressed in brain, placenta, lung, liver, kidney and pancreas.

Its subcellular location is the nucleus membrane. It localises to the cytoplasm. The protein localises to the cytosol. In terms of biological role, may be involved in intracellular vesicle traffic. Inhibits ATF4-mediated transcription, possibly by dimerizing with ATF4 to form inactive dimers that cannot bind DNA. May be involved in regulating bone mass density through an ATF4-dependent pathway. May be involved in cell cycle progression. This Homo sapiens (Human) protein is Gamma-taxilin (TXLNG).